A 268-amino-acid polypeptide reads, in one-letter code: 1,4-dihydroxy-2-naphthoyl-CoA synthase (268 aa).

Substrate-binding positions include valine 30–leucine 31, valine 70–glutamine 74, tyrosine 114–glycine 118, serine 140, and serine 146. Glutamine 139–glycine 141 contributes to the hydrogencarbonate binding site.

This sequence belongs to the enoyl-CoA hydratase/isomerase family. MenB subfamily. The cofactor is hydrogencarbonate.

It is found in the plastid. Its subcellular location is the chloroplast. It catalyses the reaction 2-succinylbenzoyl-CoA + H(+) = 1,4-dihydroxy-2-naphthoyl-CoA + H2O. The protein operates within quinol/quinone metabolism; 1,4-dihydroxy-2-naphthoate biosynthesis; 1,4-dihydroxy-2-naphthoate from chorismate: step 6/7. Its pathway is quinol/quinone metabolism; menaquinone biosynthesis. Its function is as follows. Converts o-succinylbenzoyl-CoA (OSB-CoA) to 1,4-dihydroxy-2-naphthoyl-CoA (DHNA-CoA). In Cyanidium caldarium (Red alga), this protein is 1,4-dihydroxy-2-naphthoyl-CoA synthase (menB).